Reading from the N-terminus, the 593-residue chain is MIQALLVIICLAVFPHQGSSIILESGNVNDYEVVYPQKVPALLKGGVQNPQPETKYEDTMRYEFQVNGEPVVLHLERNKGLFSEDYTETHYAPDGREITTSPPVQDHCYYHGYIQNEADSSAVISACDGLKGHFEHQGETYFIEPLKISNSEAHAIYKDENVENEDETPEICGVTETTWESDESIEKTSQFTNTPEQDRYLQDKKYIEFYVIVDNRMYRYYNNDKPAIKIRVYEMINAVNTKFRPLKIHIALIGLEIWSNKDKFEVKPAASVTLKSFGEWRETVLLPRKRNDNAQLLTGIDFNGNTVGRAYIGSLCKTNESVAIVQDYNRRISLVASTITHELGHNLGIHHDKASCICIPGPCIMLKKRTAPAFQFSSCSIREYREYLLRDRPQCILNKPLSTDIVSPPICGNYFVEVGEECDCGSPQACQSACCNAATCQFKGAETECRVAKDDCDLPELCTGQSAECPTDSLQRNGHPCQNNQSYCYNGTCPTLTNQCITLLGPHFTVSPKGCFDLNMRGDDGSFCRMEDGTKIPCAAKDVKCGRLYCTEKNTMSCLIPPNPDGIMAEPGTKCGDGMVCSKGQCVDVQTAY.

A signal peptide spans 1 to 20 (MIQALLVIICLAVFPHQGSS). The propeptide occupies 21–196 (IILESGNVND…KTSQFTNTPE (176 aa)). A Peptidase M12B domain is found at 205–400 (KYIEFYVIVD…DRPQCILNKP (196 aa)). Glu-208 and Asp-292 together coordinate Ca(2+). Disulfide bonds link Cys-316–Cys-395, Cys-356–Cys-379, and Cys-358–Cys-363. The N-linked (GlcNAc...) asparagine glycan is linked to Asn-319. His-341, His-345, and His-351 together coordinate Zn(2+). Cys-395, Asn-398, Ile-410, Asn-413, Phe-415, Glu-417, Glu-420, and Asp-423 together coordinate Ca(2+). The region spanning 408–477 (PPICGNYFVE…ECPTDSLQRN (70 aa)) is the Disintegrin domain. 12 disulfide bridges follow: Cys-411–Cys-440, Cys-422–Cys-435, Cys-424–Cys-430, Cys-434–Cys-462, Cys-449–Cys-469, Cys-456–Cys-488, Cys-481–Cys-493, Cys-500–Cys-550, Cys-515–Cys-558, Cys-528–Cys-538, Cys-545–Cys-581, and Cys-575–Cys-586. Residues 455 to 457 (DCD) carry the D/ECD-tripeptide motif. Ca(2+)-binding residues include Asp-457, Leu-458, Glu-460, Asp-472, and Ser-473. A glycan (N-linked (GlcNAc...) asparagine) is linked at Asn-490.

This sequence belongs to the venom metalloproteinase (M12B) family. P-III subfamily. P-IIIa sub-subfamily. In terms of assembly, monomer. The cofactor is Zn(2+). As to expression, expressed by the venom gland.

It localises to the secreted. Functionally, snake venom zinc metalloproteinase that cleaves the membrane-bound precursor of TNF-alpha (TNF) into its mature soluble form showing the same digestion pattern than ADAM17. The protein is Zinc metalloproteinase-disintegrin-like kaouthiagin-like of Naja atra (Chinese cobra).